Reading from the N-terminus, the 176-residue chain is Probable superoxide oxidase CybB (176 aa).

4 consecutive transmembrane segments (helical) span residues 7–27, 44–64, 85–105, and 137–157; these read CLQI…WSSI, IHFS…LIQL, VGHW…IAIL, and HLLL…AALL. Residues His-13 and His-45 each contribute to the heme b site. Residues His-137 and His-151 each coordinate heme b.

This sequence belongs to the cytochrome b561 family. The cofactor is heme b.

It localises to the cell inner membrane. The enzyme catalyses a ubiquinol + 2 O2 = 2 superoxide + a ubiquinone + 2 H(+). In terms of biological role, B-type di-heme cytochrome. Catalyzes the oxidation of superoxide to molecular oxygen and transfers the extracted electrons to ubiquinone through the two hemes. The chain is Probable superoxide oxidase CybB (cybB) from Yersinia pestis.